Reading from the N-terminus, the 267-residue chain is Ribosomal RNA small subunit methyltransferase A (267 aa).

S-adenosyl-L-methionine-binding residues include Asn-18, Leu-20, Gly-45, Glu-66, Asp-91, and Asn-112.

Belongs to the class I-like SAM-binding methyltransferase superfamily. rRNA adenine N(6)-methyltransferase family. RsmA subfamily.

It is found in the cytoplasm. It catalyses the reaction adenosine(1518)/adenosine(1519) in 16S rRNA + 4 S-adenosyl-L-methionine = N(6)-dimethyladenosine(1518)/N(6)-dimethyladenosine(1519) in 16S rRNA + 4 S-adenosyl-L-homocysteine + 4 H(+). Specifically dimethylates two adjacent adenosines (A1518 and A1519) in the loop of a conserved hairpin near the 3'-end of 16S rRNA in the 30S particle. May play a critical role in biogenesis of 30S subunits. The sequence is that of Ribosomal RNA small subunit methyltransferase A from Shewanella amazonensis (strain ATCC BAA-1098 / SB2B).